A 59-amino-acid polypeptide reads, in one-letter code: uncharacterized protein (59 aa).

A signal peptide spans 1-17; sequence MIASIWYAELGCASAIA.

This is an uncharacterized protein from Rickettsia prowazekii (strain Madrid E).